The chain runs to 227 residues: Ferritin light chain (227 aa).

Residues 1-19 (MKFFVALALFACLGSLALA) form the signal peptide. Residues Cys-25 and Cys-44 are joined by a disulfide bond. In terms of domain architecture, Ferritin-like diiron spans 48-208 (FAGIDHIEPE…GYANDLAKLM (161 aa)).

It belongs to the ferritin family. Oligomer of 12 light (L) chains and 12 heavy (H) chains; L and H chains are disulfide-linked. The functional molecule forms a roughly spherical shell with a diameter of 12 nm and contains a central cavity into which the insoluble ferric iron core is deposited. In terms of tissue distribution, expressed in hemolymph, gut, ovaries and to a lesser extent in testes (at protein level). Expressed in the head (at protein level).

It localises to the golgi apparatus. The protein resides in the secreted. In terms of biological role, stores iron in a soluble, non-toxic, readily available form. Important for iron homeostasis. Iron is taken up in the ferrous form and deposited as ferric hydroxides after oxidation. Ferritin is composed of a heavy (H) chain which is responsible for the oxidation and uptake of ferrous iron, and a light (L) chain which facilitates the nucleation of the ferrihydrite iron core. Required for dietary iron absorption in the midgut. Involved in tissue iron detoxification by exporting excess iron. Plays a role in the maintenance of circadian rhythms. Required for embryo and larval development. The polypeptide is Ferritin light chain (Drosophila melanogaster (Fruit fly)).